The primary structure comprises 307 residues: Myeloid-associated differentiation marker-like protein 2 (307 aa).

2 MARVEL domains span residues 17-154 (AVTS…ARPG) and 159-303 (YMAT…RIRF). Transmembrane regions (helical) follow at residues 53–73 (FCMAAWGFCFAFSVLVVACEF), 90–110 (AFAMLATLLCATAAVIYPLYF), 129–149 (LAASVFAGLLFLAYAAEVALT), 163–183 (VSGLLKIVQAFVACIIFGALV), 198–218 (VAVYSLCFMATVAVVVLSVMG), 232–252 (VVYTFLAVLLYLSAAVIWPVF), and 278–298 (LVVAIFTYVNLLLYIVDLAYS).

It belongs to the MAL family.

The protein localises to the membrane. The protein is Myeloid-associated differentiation marker-like protein 2 (Myadml2) of Rattus norvegicus (Rat).